The following is a 314-amino-acid chain: Taste receptor type 2 member 42 (314 aa).

Residues Met-1 to Lys-7 are Extracellular-facing. Residues Ile-8 to Gly-28 form a helical membrane-spanning segment. The Cytoplasmic segment spans residues Leu-29–Cys-50. The chain crosses the membrane as a helical span at residues Leu-51–Leu-71. Residues Ala-72–Thr-101 are Extracellular-facing. The helical transmembrane segment at Cys-102 to Leu-122 threads the bilayer. Residues Arg-123–Asn-127 lie on the Cytoplasmic side of the membrane. The helical transmembrane segment at Gly-128–Leu-148 threads the bilayer. The Extracellular segment spans residues Glu-149 to Leu-187. Asn-163 carries N-linked (GlcNAc...) asparagine glycosylation. Residues Thr-188 to Val-208 form a helical membrane-spanning segment. Topologically, residues Arg-209 to Ser-238 are cytoplasmic. A helical membrane pass occupies residues Phe-239–Met-259. Over Leu-260 to Cys-265 the chain is Extracellular. A helical membrane pass occupies residues Ile-266–Leu-286. Over Gly-287 to Leu-314 the chain is Cytoplasmic.

The protein belongs to the G-protein coupled receptor T2R family.

It localises to the membrane. Its function is as follows. Receptor that may play a role in the perception of bitterness and is gustducin-linked. May play a role in sensing the chemical composition of the gastrointestinal content. The activity of this receptor may stimulate alpha gustducin, mediate PLC-beta-2 activation and lead to the gating of TRPM5. The chain is Taste receptor type 2 member 42 (TAS2R42) from Homo sapiens (Human).